Reading from the N-terminus, the 203-residue chain is Octanoyltransferase (203 aa).

The 174-residue stretch at 30-203 (EDQDNYFFIT…HIIKEGRKLV (174 aa)) folds into the BPL/LPL catalytic domain. Substrate is bound by residues 69-76 (RGGSVTFH), 135-137 (SVG), and 148-150 (GIS). The Acyl-thioester intermediate role is filled by cysteine 166.

This sequence belongs to the LipB family.

It localises to the cytoplasm. It carries out the reaction octanoyl-[ACP] + L-lysyl-[protein] = N(6)-octanoyl-L-lysyl-[protein] + holo-[ACP] + H(+). It functions in the pathway protein modification; protein lipoylation via endogenous pathway; protein N(6)-(lipoyl)lysine from octanoyl-[acyl-carrier-protein]: step 1/2. In terms of biological role, catalyzes the transfer of endogenously produced octanoic acid from octanoyl-acyl-carrier-protein onto the lipoyl domains of lipoate-dependent enzymes. Lipoyl-ACP can also act as a substrate although octanoyl-ACP is likely to be the physiological substrate. In Persephonella marina (strain DSM 14350 / EX-H1), this protein is Octanoyltransferase.